Here is a 192-residue protein sequence, read N- to C-terminus: Adenylate kinase (192 aa).

10–18 provides a ligand contact to ATP; that stretch reads GVPGVGSTT.

This sequence belongs to the archaeal adenylate kinase family. In terms of assembly, monomer.

The protein localises to the cytoplasm. The catalysed reaction is AMP + ATP = 2 ADP. This is Adenylate kinase (adkA) from Methanocaldococcus jannaschii (strain ATCC 43067 / DSM 2661 / JAL-1 / JCM 10045 / NBRC 100440) (Methanococcus jannaschii).